The chain runs to 138 residues: Glutathione S-transferase Mu 5 (138 aa).

A Phosphoserine modification is found at Ser1. In terms of domain architecture, GST N-terminal spans 1–71 (SMVLGYWDIR…KITQSNAILR (71 aa)). Glutathione-binding positions include 6–7 (YW), 39–43 (WLDVK), 52–53 (NL), and 65–66 (QS). Residues 72 to 135 (IRVDIMENQI…FMCRCFKMPI (64 aa)) form the GST C-terminal domain.

The protein belongs to the GST superfamily. Mu family. Homodimer.

The protein localises to the cytoplasm. The catalysed reaction is RX + glutathione = an S-substituted glutathione + a halide anion + H(+). Functionally, conjugation of reduced glutathione to a wide number of exogenous and endogenous hydrophobic electrophiles. This Mesocricetus auratus (Golden hamster) protein is Glutathione S-transferase Mu 5.